Here is a 1135-residue protein sequence, read N- to C-terminus: Phytochrome C (1135 aa).

Residues Met-1–Cys-11 are compositionally biased toward polar residues. Residues Met-1–Val-26 form a disordered region. In terms of domain architecture, GAF spans Asn-216–Val-399. Cys-321 contacts phytochromobilin. PAS domains follow at residues Val-618–Ile-688 and Ile-748–Ser-822. In terms of domain architecture, Histidine kinase spans Tyr-902–Gln-1122.

This sequence belongs to the phytochrome family. As to quaternary structure, homodimer. In terms of processing, contains one covalently linked phytochromobilin chromophore.

Functionally, regulatory photoreceptor which exists in two forms that are reversibly interconvertible by light: the Pr form that absorbs maximally in the red region of the spectrum and the Pfr form that absorbs maximally in the far-red region. Photoconversion of Pr to Pfr induces an array of morphogenic responses, whereas reconversion of Pfr to Pr cancels the induction of those responses. Pfr controls the expression of a number of nuclear genes including those encoding the small subunit of ribulose-bisphosphate carboxylase, chlorophyll A/B binding protein, protochlorophyllide reductase, rRNA, etc. It also controls the expression of its own gene(s) in a negative feedback fashion. The sequence is that of Phytochrome C (PHYC) from Sorghum bicolor (Sorghum).